Consider the following 132-residue polypeptide: Antimicrobial protein Ace-AMP1 (132 aa).

The signal sequence occupies residues 1–27 (MVRVVSLLAASTFILLIMIISSPYANS). 4 disulfide bridges follow: C31/C76, C41/C54, C55/C100, and C74/C116.

This sequence belongs to the plant LTP family. Highly divergent. In terms of assembly, monomer.

Its function is as follows. Antifungal and antibacterial activity against the Gram-positive bacteria B.megaterium and S.lutea. The polypeptide is Antimicrobial protein Ace-AMP1 (Allium cepa (Onion)).